A 396-amino-acid chain; its full sequence is Pyruvate dehydrogenase E1 component subunit alpha type I, mitochondrial (396 aa).

The transit peptide at 1-25 (MIFVFANIFKVPTVSPSVMAISVRL) directs the protein to the mitochondrion. Residues His-88, Tyr-114, Arg-115, Gly-153, Gly-161, Val-163, Asp-192, Gly-193, Ala-194, Asn-221, and Tyr-223 each coordinate pyruvate. 2 residues coordinate thiamine diphosphate: Tyr-114 and Arg-115. Thiamine diphosphate contacts are provided by Gly-161, Val-163, Asp-192, Gly-193, Ala-194, and Asn-221. Asp-192 contacts Mg(2+). Mg(2+)-binding residues include Asn-221 and Tyr-223. Position 288 (His-288) interacts with thiamine diphosphate. Residues Ser-289 and Ser-296 each carry the phosphoserine modification.

As to quaternary structure, heterotetramer of two PDHA1 and two PDHB subunits. The heterotetramer interacts with DLAT, and is part of the multimeric pyruvate dehydrogenase complex that contains multiple copies of pyruvate dehydrogenase (E1), dihydrolipoamide acetyltransferase (DLAT, E2) and lipoamide dehydrogenase (DLD, E3). Requires thiamine diphosphate as cofactor. Mg(2+) serves as cofactor.

It is found in the mitochondrion matrix. The catalysed reaction is N(6)-[(R)-lipoyl]-L-lysyl-[protein] + pyruvate + H(+) = N(6)-[(R)-S(8)-acetyldihydrolipoyl]-L-lysyl-[protein] + CO2. Pyruvate dehydrogenase activity is inhibited by phosphorylation of PDHA1; it is reactivated by dephosphorylation. Its function is as follows. The pyruvate dehydrogenase complex catalyzes the overall conversion of pyruvate to acetyl-CoA and CO(2), and thereby links the glycolytic pathway to the tricarboxylic cycle. The chain is Pyruvate dehydrogenase E1 component subunit alpha type I, mitochondrial from Ascaris suum (Pig roundworm).